The chain runs to 127 residues: Large-conductance mechanosensitive channel (127 aa).

The next 3 membrane-spanning stretches (helical) occupy residues Glu-9–Phe-29, Ile-32–Val-52, and Val-75–Leu-95.

Belongs to the MscL family. As to quaternary structure, homopentamer.

It is found in the cell inner membrane. Functionally, channel that opens in response to stretch forces in the membrane lipid bilayer. May participate in the regulation of osmotic pressure changes within the cell. This Legionella pneumophila (strain Corby) protein is Large-conductance mechanosensitive channel.